Here is a 66-residue protein sequence, read N- to C-terminus: Large ribosomal subunit protein bL33 (66 aa).

This sequence belongs to the bacterial ribosomal protein bL33 family.

The sequence is that of Large ribosomal subunit protein bL33 from Prochlorococcus marinus (strain MIT 9303).